Here is a 214-residue protein sequence, read N- to C-terminus: Holliday junction branch migration complex subunit RuvA (214 aa).

Residues 1–64 (MITRIRGEML…EDAMTLYGFT (64 aa)) form a domain I region. Positions 65–143 (SGEQLAVFEL…DITSKDAYQD (79 aa)) are domain II. A flexible linker region spans residues 144 to 160 (ISASEKLDNTGEKLGIS). Positions 161 to 214 (TRHKHLDELKAALSSLGYTNREIEKTVDAIQGQITEGQDMEELLRLALQKLNTK) are domain III.

It belongs to the RuvA family. In terms of assembly, homotetramer. Forms an RuvA(8)-RuvB(12)-Holliday junction (HJ) complex. HJ DNA is sandwiched between 2 RuvA tetramers; dsDNA enters through RuvA and exits via RuvB. An RuvB hexamer assembles on each DNA strand where it exits the tetramer. Each RuvB hexamer is contacted by two RuvA subunits (via domain III) on 2 adjacent RuvB subunits; this complex drives branch migration. In the full resolvosome a probable DNA-RuvA(4)-RuvB(12)-RuvC(2) complex forms which resolves the HJ.

The protein resides in the cytoplasm. Functionally, the RuvA-RuvB-RuvC complex processes Holliday junction (HJ) DNA during genetic recombination and DNA repair, while the RuvA-RuvB complex plays an important role in the rescue of blocked DNA replication forks via replication fork reversal (RFR). RuvA specifically binds to HJ cruciform DNA, conferring on it an open structure. The RuvB hexamer acts as an ATP-dependent pump, pulling dsDNA into and through the RuvAB complex. HJ branch migration allows RuvC to scan DNA until it finds its consensus sequence, where it cleaves and resolves the cruciform DNA. This chain is Holliday junction branch migration complex subunit RuvA, found in Natranaerobius thermophilus (strain ATCC BAA-1301 / DSM 18059 / JW/NM-WN-LF).